The following is a 240-amino-acid chain: 2,3,4,5-tetrahydropyridine-2,6-dicarboxylate N-acetyltransferase (240 aa).

The protein belongs to the transferase hexapeptide repeat family. DapH subfamily.

The enzyme catalyses (S)-2,3,4,5-tetrahydrodipicolinate + acetyl-CoA + H2O = L-2-acetamido-6-oxoheptanedioate + CoA. Its pathway is amino-acid biosynthesis; L-lysine biosynthesis via DAP pathway; LL-2,6-diaminopimelate from (S)-tetrahydrodipicolinate (acetylase route): step 1/3. Functionally, catalyzes the transfer of an acetyl group from acetyl-CoA to tetrahydrodipicolinate. This Bacillus cereus (strain AH187) protein is 2,3,4,5-tetrahydropyridine-2,6-dicarboxylate N-acetyltransferase.